We begin with the raw amino-acid sequence, 171 residues long: Cardioactive peptide (171 aa).

The N-terminal stretch at 1 to 26 (MQMYHVVLGCSLAILLVILDIPQASC) is a signal peptide. Residues 27-49 (DDVVIQKRQVDPAEMDRLLDPKR) constitute a propeptide that is removed on maturation. Residues cysteine 54 and cysteine 60 are joined by a disulfide bond. Cysteine 60 carries the post-translational modification Cysteine amide. Residues 64–171 (RSDESMGTLV…QEEITKPWSR (108 aa)) constitute a propeptide that is removed on maturation. The tract at residues 116–171 (QSNQFGAGMDRPLPLPIAGYRRKRFADPESQAPAPHSNLPRATSQLQEEITKPWSR) is disordered.

Central nervous system; most neurons exhibit coexpression with burs.

The protein resides in the secreted. Functionally, cardioregulatory neurohormone that increases heart beat rate during adult wing inflation; has no effect on beat amplitude. The effect of CCAP is both ino- and chronotropic. This Periplaneta americana (American cockroach) protein is Cardioactive peptide.